The following is a 105-amino-acid chain: Protein ORFg in retron Ec67 (105 aa).

The chain is Protein ORFg in retron Ec67 from Escherichia coli.